A 130-amino-acid chain; its full sequence is Single-stranded DNA-binding protein 1 (130 aa).

The region spanning 1–104 is the SSB domain; that stretch reads MINNVVLIGR…VVAESFQILE (104 aa). A disordered region spans residues 108-130; the sequence is NTANTSSLADSMPDYGPEPDLPF.

Homotetramer.

The sequence is that of Single-stranded DNA-binding protein 1 (ssb1) from Streptococcus pyogenes serotype M18 (strain MGAS8232).